The sequence spans 92 residues: Phosphoribosyl-ATP pyrophosphatase (92 aa).

Belongs to the PRA-PH family.

The protein resides in the cytoplasm. It carries out the reaction 1-(5-phospho-beta-D-ribosyl)-ATP + H2O = 1-(5-phospho-beta-D-ribosyl)-5'-AMP + diphosphate + H(+). It functions in the pathway amino-acid biosynthesis; L-histidine biosynthesis; L-histidine from 5-phospho-alpha-D-ribose 1-diphosphate: step 2/9. This chain is Phosphoribosyl-ATP pyrophosphatase, found in Leptospira biflexa serovar Patoc (strain Patoc 1 / ATCC 23582 / Paris).